The sequence spans 228 residues: LexA repressor (228 aa).

The H-T-H motif DNA-binding region spans 26–46; sequence FDEMKDALDLRSKSGIHRLIT. Catalysis depends on for autocatalytic cleavage activity residues Ser149 and Lys187.

It belongs to the peptidase S24 family. As to quaternary structure, homodimer.

The catalysed reaction is Hydrolysis of Ala-|-Gly bond in repressor LexA.. Its function is as follows. Represses a number of genes involved in the response to DNA damage (SOS response), including recA and lexA. Has been shown to bind to the direct repeat sequence 5'-GTT-N(7)-GTTC-3'. In the presence of single-stranded DNA, RecA interacts with LexA causing an autocatalytic cleavage which disrupts the DNA-binding part of LexA, leading to derepression of the SOS regulon and eventually DNA repair. This is LexA repressor from Cereibacter sphaeroides (strain ATCC 17023 / DSM 158 / JCM 6121 / CCUG 31486 / LMG 2827 / NBRC 12203 / NCIMB 8253 / ATH 2.4.1.) (Rhodobacter sphaeroides).